The following is a 248-amino-acid chain: 3-deoxy-manno-octulosonate cytidylyltransferase (248 aa).

This sequence belongs to the KdsB family.

It is found in the cytoplasm. The enzyme catalyses 3-deoxy-alpha-D-manno-oct-2-ulosonate + CTP = CMP-3-deoxy-beta-D-manno-octulosonate + diphosphate. It functions in the pathway nucleotide-sugar biosynthesis; CMP-3-deoxy-D-manno-octulosonate biosynthesis; CMP-3-deoxy-D-manno-octulosonate from 3-deoxy-D-manno-octulosonate and CTP: step 1/1. It participates in bacterial outer membrane biogenesis; lipopolysaccharide biosynthesis. Its function is as follows. Activates KDO (a required 8-carbon sugar) for incorporation into bacterial lipopolysaccharide in Gram-negative bacteria. The polypeptide is 3-deoxy-manno-octulosonate cytidylyltransferase (Desulfosudis oleivorans (strain DSM 6200 / JCM 39069 / Hxd3) (Desulfococcus oleovorans)).